Consider the following 497-residue polypeptide: Putative endothelial lipase (497 aa).

The first 23 residues, 1–23, serve as a signal peptide directing secretion; that stretch reads MRACPFLLLLLLPLLLSLGRIAA. Cys-73 and Cys-86 are disulfide-bonded. 2 N-linked (GlcNAc...) asparagine glycosylation sites follow: Asn-89 and Asn-145. Ser-178 functions as the Nucleophile in the catalytic mechanism. Asp-202 functions as the Charge relay system in the catalytic mechanism. Residues Cys-262 and Cys-282 are joined by a disulfide bond. The active-site Charge relay system is His-284. 2 disulfide bridges follow: Cys-307/Cys-326 and Cys-318/Cys-321. Heparin is bound at residue 335-347; sequence KMRNKRNSKMYLK. In terms of domain architecture, PLAT spans 357-492; sequence FHYQLKIHVF…CLKMVKVEKH (136 aa). An N-linked (GlcNAc...) asparagine glycan is attached at Asn-403.

Belongs to the AB hydrolase superfamily. Lipase family. As to quaternary structure, head to tail homodimer. Expressed by the venom gland.

The protein localises to the secreted. The enzyme catalyses a triacylglycerol + H2O = a diacylglycerol + a fatty acid + H(+). Its activity is regulated as follows. Inhibited by serum. In terms of biological role, has phospholipase and triglyceride lipase activities. The sequence is that of Putative endothelial lipase from Crotalus adamanteus (Eastern diamondback rattlesnake).